The following is a 363-amino-acid chain: Putative transcriptional activator MSA2 (363 aa).

Positions 1–20 are disordered; the sequence is MVYTTPQQQQRFSSTPQSSH. 2 positions are modified to phosphoserine: Ser157 and Ser292.

As to quaternary structure, interacts with transcription complexes SCB-binding factor (SBF) and MCB-binding factor (MBF). Interacts with SWI4.

This chain is Putative transcriptional activator MSA2 (MSA2), found in Saccharomyces cerevisiae (strain ATCC 204508 / S288c) (Baker's yeast).